A 419-amino-acid polypeptide reads, in one-letter code: Histidine--tRNA ligase (419 aa).

This sequence belongs to the class-II aminoacyl-tRNA synthetase family. As to quaternary structure, homodimer.

The protein localises to the cytoplasm. The enzyme catalyses tRNA(His) + L-histidine + ATP = L-histidyl-tRNA(His) + AMP + diphosphate + H(+). This is Histidine--tRNA ligase from Novosphingobium aromaticivorans (strain ATCC 700278 / DSM 12444 / CCUG 56034 / CIP 105152 / NBRC 16084 / F199).